Consider the following 284-residue polypeptide: 4-hydroxybenzoate octaprenyltransferase (284 aa).

The next 9 membrane-spanning stretches (helical) occupy residues 19–39 (IGTLLLLWPTLWSLIIAAKGM), 42–62 (FDVLVVFILGVVLMRSAGCVI), 93–113 (IVLFLVLAVVSFLLVLTMNPL), 114–134 (TIKLSFIGVGLAFIYPFMKRF), 136–156 (HLPQLFLGLAFSWAIPMAWAA), 161–181 (LPSIVWFIFVINALWTIAYDT), 209–229 (LMVGALQLVTLAMLIALGMHY), 235–252 (FYWALLVSGSLFVYQQHL), and 264–284 (AFLNNNYVGMAVTVGLFITFW).

It belongs to the UbiA prenyltransferase family. Mg(2+) is required as a cofactor.

The protein localises to the cell inner membrane. The enzyme catalyses all-trans-octaprenyl diphosphate + 4-hydroxybenzoate = 4-hydroxy-3-(all-trans-octaprenyl)benzoate + diphosphate. It participates in cofactor biosynthesis; ubiquinone biosynthesis. In terms of biological role, catalyzes the prenylation of para-hydroxybenzoate (PHB) with an all-trans polyprenyl group. Mediates the second step in the final reaction sequence of ubiquinone-8 (UQ-8) biosynthesis, which is the condensation of the polyisoprenoid side chain with PHB, generating the first membrane-bound Q intermediate 3-octaprenyl-4-hydroxybenzoate. The chain is 4-hydroxybenzoate octaprenyltransferase from Vibrio atlanticus (strain LGP32) (Vibrio splendidus (strain Mel32)).